A 140-amino-acid chain; its full sequence is Profilin (140 aa).

S2 bears the N-acetylserine mark.

It belongs to the profilin family. Occurs in many kinds of cells as a complex with monomeric actin in a 1:1 ratio.

It is found in the cytoplasm. The protein resides in the cytoskeleton. Its function is as follows. Binds to actin and affects the structure of the cytoskeleton. At high concentrations, profilin prevents the polymerization of actin, whereas it enhances it at low concentrations. By binding to PIP2, it inhibits the formation of IP3 and DG. In Heliocidaris crassispina (Sea urchin), this protein is Profilin.